The sequence spans 165 residues: Putative tyrosine-protein phosphatase AMV078 (165 aa).

The region spanning 2–149 (NISNINNDIY…LKFYNSYKNI (148 aa)) is the Tyrosine-protein phosphatase domain. Cys-94 (phosphocysteine intermediate) is an active-site residue.

This sequence belongs to the protein-tyrosine phosphatase family. Non-receptor class dual specificity subfamily.

It catalyses the reaction O-phospho-L-tyrosyl-[protein] + H2O = L-tyrosyl-[protein] + phosphate. The chain is Putative tyrosine-protein phosphatase AMV078 from Amsacta moorei entomopoxvirus (AmEPV).